A 77-amino-acid polypeptide reads, in one-letter code: RNA-binding protein Hfq (77 aa).

The Sm domain maps to 9-69 (DQFLNQLRKE…ISTFAPQKNV (61 aa)).

It belongs to the Hfq family. Homohexamer.

Functionally, RNA chaperone that binds small regulatory RNA (sRNAs) and mRNAs to facilitate mRNA translational regulation in response to envelope stress, environmental stress and changes in metabolite concentrations. Also binds with high specificity to tRNAs. The chain is RNA-binding protein Hfq from Shouchella clausii (strain KSM-K16) (Alkalihalobacillus clausii).